The following is a 340-amino-acid chain: Beta-1,3-N-acetylglucosaminyltransferase radical fringe (340 aa).

The Cytoplasmic segment spans residues 1-4 (MKIT). The helical; Signal-anchor for type II membrane protein transmembrane segment at 5–25 (YVGLIKVCFLVFLLLCATVLL) threads the bilayer. Topologically, residues 26 to 340 (NISWRQRDSS…AFSLAEDPTR (315 aa)) are lumenal. Asn42 carries N-linked (GlcNAc...) asparagine glycosylation. Position 110 (Arg110) interacts with substrate. Residue Asn149 is glycosylated (N-linked (GlcNAc...) asparagine). 2 disulfide bridges follow: Cys150-Cys161 and Cys179-Cys242. Asp183 contributes to the substrate binding site. Asp184 provides a ligand contact to Mn(2+). Asp272 is an active-site residue. His296 is a binding site for Mn(2+).

Belongs to the glycosyltransferase 31 family. It depends on Mn(2+) as a cofactor.

It localises to the golgi apparatus membrane. The enzyme catalyses 3-O-(alpha-L-fucosyl)-L-threonyl-[EGF-like domain protein] + UDP-N-acetyl-alpha-D-glucosamine = 3-O-(N-acetyl-beta-D-glucosaminyl-(1-&gt;3)-alpha-L-fucosyl)-L-threonyl-[EGF-like domain protein] + UDP + H(+). The catalysed reaction is 3-O-(alpha-L-fucosyl)-L-seryl-[EGF-like domain protein] + UDP-N-acetyl-alpha-D-glucosamine = 3-O-(N-acetyl-beta-D-glucosaminyl-(1-&gt;3)-alpha-L-fucosyl)-L-seryl-[EGF-like domain protein] + UDP + H(+). Glycosyltransferase that initiates the elongation of O-linked fucose residues attached to EGF-like repeats in the extracellular domain of Notch molecules. The polypeptide is Beta-1,3-N-acetylglucosaminyltransferase radical fringe (rfng) (Xenopus laevis (African clawed frog)).